The chain runs to 361 residues: Peptide chain release factor 1 (361 aa).

The residue at position 235 (glutamine 235) is an N5-methylglutamine.

The protein belongs to the prokaryotic/mitochondrial release factor family. Post-translationally, methylated by PrmC. Methylation increases the termination efficiency of RF1.

The protein resides in the cytoplasm. Functionally, peptide chain release factor 1 directs the termination of translation in response to the peptide chain termination codons UAG and UAA. The sequence is that of Peptide chain release factor 1 from Xanthomonas euvesicatoria pv. vesicatoria (strain 85-10) (Xanthomonas campestris pv. vesicatoria).